The following is a 337-amino-acid chain: MRILGIESSCDETGIAIYDDEKGLLAHQLYSQVKVHADYGGVVPELASRDHVRKTLPLIDAAFAQAGCGPEDLDGVAYTAGPGLVGALLVGTSIGRSLAYGWDIPAVAVHHMEGHLLAPMLEENVPEFPFIALLVSGGHTMMVKVAGIGQYEVLGESVDDAAGEAFDKTAKLLGLDYPGGPRLAKMAEQGVAKRFIFPRPMTDKPGLDFSFSGLKTAASITIRENNDDEQTKADIAHAFQTAVIDTLVIKCKRALKQTGIKRLVIAGGVSANTQLRLQLERVMQGMKGQVYYPRTEFCTDNGAMIAYAGMQRLKAGQFATLDMKTKPRWPIDSLEAI.

Fe cation is bound by residues His111 and His115. Substrate-binding positions include 134 to 138 (LVSGG), Asp167, Gly180, and Asn272. Asp300 contacts Fe cation.

It belongs to the KAE1 / TsaD family. The cofactor is Fe(2+).

It is found in the cytoplasm. The catalysed reaction is L-threonylcarbamoyladenylate + adenosine(37) in tRNA = N(6)-L-threonylcarbamoyladenosine(37) in tRNA + AMP + H(+). In terms of biological role, required for the formation of a threonylcarbamoyl group on adenosine at position 37 (t(6)A37) in tRNAs that read codons beginning with adenine. Is involved in the transfer of the threonylcarbamoyl moiety of threonylcarbamoyl-AMP (TC-AMP) to the N6 group of A37, together with TsaE and TsaB. TsaD likely plays a direct catalytic role in this reaction. This Pseudoalteromonas translucida (strain TAC 125) protein is tRNA N6-adenosine threonylcarbamoyltransferase.